A 501-amino-acid polypeptide reads, in one-letter code: 25-hydroxyvitamin D-1 alpha hydroxylase, mitochondrial (501 aa).

C448 contacts heme.

It belongs to the cytochrome P450 family. It depends on heme as a cofactor. Kidney.

The protein localises to the mitochondrion membrane. The enzyme catalyses calcidiol + 2 reduced [adrenodoxin] + O2 + 2 H(+) = calcitriol + 2 oxidized [adrenodoxin] + H2O. The catalysed reaction is secalciferol + 2 reduced [adrenodoxin] + O2 + 2 H(+) = calcitetrol + 2 oxidized [adrenodoxin] + H2O. The protein operates within hormone biosynthesis; cholecalciferol biosynthesis. Catalyzes the conversion of 25-hydroxyvitamin D3 (25(OH)D3) to 1-alpha,25-dihydroxyvitamin D3 (1alpha,25(OH)(2)D3), and of 24,25-dihydroxyvitamin D3 (24,25(OH)(2)D3) to 1-alpha,24,25-trihydroxyvitamin D3 (1alpha,24,25(OH)(3)D3). Is also active with 25-hydroxy-24-oxo-vitamin D3. Plays an important role in normal bone growth, calcium metabolism, and tissue differentiation. This chain is 25-hydroxyvitamin D-1 alpha hydroxylase, mitochondrial (Cyp27b1), found in Rattus norvegicus (Rat).